Here is a 733-residue protein sequence, read N- to C-terminus: Methionine--tRNA ligase (733 aa).

Positions 11 to 21 (PYANGPIHAGH) match the 'HIGH' region motif. The Zn(2+) site is built by Cys143, Cys146, Cys156, and Cys159. A 'KMSKS' region motif is present at residues 345–349 (KFSTS). Residue Thr348 coordinates ATP. The 101-residue stretch at 633–733 (DFMKLDLRVG…KEVKLGARIR (101 aa)) folds into the tRNA-binding domain.

This sequence belongs to the class-I aminoacyl-tRNA synthetase family. MetG type 1 subfamily. Homodimer. The cofactor is Zn(2+).

Its subcellular location is the cytoplasm. The enzyme catalyses tRNA(Met) + L-methionine + ATP = L-methionyl-tRNA(Met) + AMP + diphosphate. Is required not only for elongation of protein synthesis but also for the initiation of all mRNA translation through initiator tRNA(fMet) aminoacylation. This is Methionine--tRNA ligase from Thermococcus onnurineus (strain NA1).